A 194-amino-acid chain; its full sequence is Mediator of RNA polymerase II transcription subunit 8 (194 aa).

The protein belongs to the Mediator complex subunit 8 family. As to quaternary structure, component of the Mediator complex.

Its subcellular location is the nucleus. Its function is as follows. Component of the Mediator complex, a coactivator involved in the regulated transcription of nearly all RNA polymerase II-dependent genes. Mediator functions as a bridge to convey information from gene-specific regulatory proteins to the basal RNA polymerase II transcription machinery. Mediator is recruited to promoters by direct interactions with regulatory proteins and serves as a scaffold for the assembly of a functional preinitiation complex with RNA polymerase II and the general transcription factors. In Yarrowia lipolytica (strain CLIB 122 / E 150) (Yeast), this protein is Mediator of RNA polymerase II transcription subunit 8 (MED8).